Reading from the N-terminus, the 210-residue chain is Large ribosomal subunit protein uL15 (210 aa).

Disordered regions lie at residues 1–64 (MADD…AAPR) and 76–104 (AAGA…TKGT). Positions 9 to 54 (EAAAKPVAEKATATALAKKAPAKAAAADKAAPAAKGETVAAKPAKA) are enriched in low complexity. The segment covering 79 to 93 (AKKEKTRVGRGEGSK) has biased composition (basic and acidic residues).

It belongs to the universal ribosomal protein uL15 family. Part of the 50S ribosomal subunit.

In terms of biological role, binds to the 23S rRNA. The polypeptide is Large ribosomal subunit protein uL15 (Leifsonia xyli subsp. xyli (strain CTCB07)).